We begin with the raw amino-acid sequence, 38 residues long: Antimicrobial peptide 1 (38 aa).

Post-translationally, disulfide bonds. As to expression, expressed in flowers but not in leaves, seeds or roots (at protein level).

Its function is as follows. Antimicrobial peptide. Active against fungal species B.cinerea (IC(50)=5.8 uM) and A.niger (IC(50)=5.6 uM) but not against F.oxysporum, F.graminearum, B.sorokinina and P.debaryanum at concentrations below 10 uM. Active against bacterial species P.syringae, B.subtilis and X.campestris. The polypeptide is Antimicrobial peptide 1 (Taraxacum officinale (Common dandelion)).